Reading from the N-terminus, the 541-residue chain is 1'-carboxy-chondrochloren decarboxylase (541 aa).

In terms of domain architecture, FAD-binding PCMH-type spans 39–226 (TTHRIPAIIS…TRMTIWLAPR (188 aa)).

The enzyme catalyses 1'-carboxy-chondrochloren A + FAD + 2 H(+) = chondrochloren A + FADH2 + CO2. The catalysed reaction is 1'-carboxy-chondrochloren B + FAD + 2 H(+) = chondrochloren B + FADH2 + CO2. Its pathway is antibiotic biosynthesis. Its activity is regulated as follows. Activity is not affected by the addition of EDTA or/and EGTA chelators or in the presence of external metals like Zn(2+), Mg(2+), Mn(2+) and Fe(2+). Activity is inhibited under low oxygen conditions. In terms of biological role, oxidative decarboxylase involved in the biosynthesis of the antibiotics chondrochloren A and chondrochloren B. Catalyzes the decarboxylation of biologically inactive pre-chondrochloren A and pre-chondrochloren B to yield mature chondrochloren A and chondrochloren B, respectively. Cannot decarboxylate free L-tyrosine, 3-chloro-tyrosine or a number of chlorinated and non-chlorinated analog substrates containing variable N-acyl chains. This is 1'-carboxy-chondrochloren decarboxylase from Chondromyces crocatus.